Consider the following 168-residue polypeptide: Probable prefoldin subunit 5 (168 aa).

Belongs to the prefoldin subunit alpha family. As to quaternary structure, heterohexamer of two PFD-alpha type and four PFD-beta type subunits.

Binds specifically to cytosolic chaperonin (c-CPN) and transfers target proteins to it. Binds to nascent polypeptide chain and promotes folding in an environment in which there are many competing pathways for nonnative proteins. The sequence is that of Probable prefoldin subunit 5 from Drosophila melanogaster (Fruit fly).